The sequence spans 329 residues: tRNA(Ile)-lysidine synthase, chloroplastic (329 aa).

32–37 (SGGQDS) serves as a coordination point for ATP.

This sequence belongs to the tRNA(Ile)-lysidine synthase family.

It is found in the plastid. It localises to the chloroplast. It carries out the reaction cytidine(34) in tRNA(Ile2) + L-lysine + ATP = lysidine(34) in tRNA(Ile2) + AMP + diphosphate + H(+). Functionally, ligates lysine onto the cytidine present at position 34 of the AUA codon-specific tRNA(Ile) that contains the anticodon CAU, in an ATP-dependent manner. Cytidine is converted to lysidine, thus changing the amino acid specificity of the tRNA from methionine to isoleucine. The chain is tRNA(Ile)-lysidine synthase, chloroplastic from Pyropia yezoensis (Susabi-nori).